The chain runs to 449 residues: Heterogeneous nuclear ribonucleoprotein H2 (449 aa).

M1 bears the N-acetylmethionine mark. M2 bears the N-acetylmethionine; in Heterogeneous nuclear ribonucleoprotein H2, N-terminally processed mark. Positions F11–S90 constitute an RRM 1 domain. S23 carries the phosphoserine modification. Residue K35 forms a Glycyl lysine isopeptide (Lys-Gly) (interchain with G-Cter in SUMO2) linkage. Residues S54 and S63 each carry the phosphoserine modification. A Glycyl lysine isopeptide (Lys-Gly) (interchain with G-Cter in SUMO2) cross-link involves residue K87. S90 bears the Phosphoserine mark. A Glycyl lysine isopeptide (Lys-Gly) (interchain with G-Cter in SUMO2) cross-link involves residue K98. One can recognise an RRM 2 domain in the interval G111–R188. R233 is modified (dimethylated arginine; alternate). Residue R233 is modified to Omega-N-methylarginine; alternate. A 1-1 repeat occupies G234 to Y249. Residues G234–Y433 form a 2 X 16 AA Gly-rich approximate repeats region. Y246 carries the post-translational modification Phosphotyrosine. The RRM 3 domain occupies H289–T364. S310 carries the post-translational modification Phosphoserine. A run of 3 repeats spans residues H354 to Y372, H374 to Y392, and A418 to Y433. Residues H354–Y392 are 2 X 19 AA perfect repeats.

As to quaternary structure, component of a ribonucleoprotein complex containing mRNAs and RNA-binding proteins including DDX5, HNRNPH2 and SRSF1 as well as splicing regulator ARVCF. Interacts with TXNL4/DIM1.

It is found in the nucleus. The protein localises to the nucleoplasm. This protein is a component of the heterogeneous nuclear ribonucleoprotein (hnRNP) complexes which provide the substrate for the processing events that pre-mRNAs undergo before becoming functional, translatable mRNAs in the cytoplasm. Binds poly(RG). The chain is Heterogeneous nuclear ribonucleoprotein H2 (Hnrnph2) from Rattus norvegicus (Rat).